Consider the following 255-residue polypeptide: MLRPLRKSVLASCRHCFKVCGGLPQKQLPLFSPLLLRARYSSTDSSTKRSNKSDKIDAPGFKKIFLVAIIGTVIFVKTVQSLDKNKPKTTLSEEEFENVVKGLKRRVAIFPQGEVDIKFSLSPSIEETRKVLQKSQGDDINELQFVDPVKVIDYYRTLRDDRYEALLNEYYKKYGCDTYAYNLPTGMLVMLLGRYFKENFKAGDKLVVVNFPHSIADATRFENEVSIVSKIFVPRKLSGSDVCKYYETVGKADII.

The transit peptide at 1-40 (MLRPLRKSVLASCRHCFKVCGGLPQKQLPLFSPLLLRARY) directs the protein to the mitochondrion. Residues 64–82 (IFLVAIIGTVIFVKTVQSL) form a helical membrane-spanning segment.

This sequence belongs to the AIM36 family.

The protein localises to the mitochondrion membrane. The sequence is that of Altered inheritance of mitochondria protein 36, mitochondrial (AIM36) from Saccharomyces cerevisiae (strain RM11-1a) (Baker's yeast).